The primary structure comprises 342 residues: Inactive chitinase-like protein 2 (342 aa).

The signal sequence occupies residues 1–19; the sequence is MKEIVRALEGYGPPKDKAA. In terms of domain architecture, Chitin-binding type-1 spans 20 to 60; the sequence is EQCGWQAGGALCPGGLCCSQYGWCANTPEYCGSGCQSQCDG. 7 cysteine pairs are disulfide-bonded: Cys22/Cys37, Cys31/Cys43, Cys36/Cys80, Cys84/Cys88, Cys122/Cys184, Cys196/Cys204, and Cys301/Cys333.

This sequence belongs to the glycosyl hydrolase 19 family. Chitinase class I subfamily.

Inactive chitinase-like protein that does not exhibit hydrolytic activity toward chitin. Binds strongly to chitin and possesses antifungal activity toward the fungal pathogen Altenaria alternata in plate assays. Probably involved in defense against fungal pathogens through a mechanism that only involves carbohydrate binding. The polypeptide is Inactive chitinase-like protein 2 (Hevea brasiliensis (Para rubber tree)).